A 374-amino-acid chain; its full sequence is MAKRDYYEVLGVNLNATEAEVKKAFRRLAMKYHPDRNPGDKDAEVKFKEAREAYEVLCDSRKRASYDQFGHAGVEQTFGGAGAGGFGFGDLGDIFGDIFGDIFSGARGGQAREQRGADLAYELVLSLEEAVHGLSRTIKVPTWINCKTCNGSGAKGSSPATCPRCNGSGQMRMQHGFLQVQQTCSVCRGRGQVIKDPCTDCHGQGRQQQTKTLSVKIPPGIDTGDRIRLAGEGEAGLFGAPPGDLYVQVRVKPHPLFHREGNDLHSEVPIDFTTAALGGEMEIPTLDGSVRLTIPPETQGGKQFRLRGKGVKALRSGAVGDLICHIVVETPVKLSPEQKDYLKQFAELLKKDEKNHSPRTRNWFDSVKDFFTSK.

The J domain occupies 5-70 (DYYEVLGVNL…RKRASYDQFG (66 aa)). The CR-type zinc finger occupies 133–210 (GLSRTIKVPT…CHGQGRQQQT (78 aa)). Residues cysteine 146, cysteine 149, cysteine 162, cysteine 165, cysteine 184, cysteine 187, cysteine 198, and cysteine 201 each contribute to the Zn(2+) site. CXXCXGXG motif repeat units lie at residues 146–153 (CKTCNGSG), 162–169 (CPRCNGSG), 184–191 (CSVCRGRG), and 198–205 (CTDCHGQG).

It belongs to the DnaJ family. As to quaternary structure, homodimer. The cofactor is Zn(2+).

The protein localises to the cytoplasm. Functionally, participates actively in the response to hyperosmotic and heat shock by preventing the aggregation of stress-denatured proteins and by disaggregating proteins, also in an autonomous, DnaK-independent fashion. Unfolded proteins bind initially to DnaJ; upon interaction with the DnaJ-bound protein, DnaK hydrolyzes its bound ATP, resulting in the formation of a stable complex. GrpE releases ADP from DnaK; ATP binding to DnaK triggers the release of the substrate protein, thus completing the reaction cycle. Several rounds of ATP-dependent interactions between DnaJ, DnaK and GrpE are required for fully efficient folding. Also involved, together with DnaK and GrpE, in the DNA replication of plasmids through activation of initiation proteins. The sequence is that of Chaperone protein DnaJ from Coxiella burnetii (strain RSA 331 / Henzerling II).